The sequence spans 166 residues: Packaging efficiency factor P6 (166 aa).

The tract at residues 134 to 166 (ILPESAGDQQEAEPVPSVGDQQETAPRKRFRAI) is disordered.

Heterodimer of P6 and P9; further multimerizes as hexamers of heterodimers. Part of the dodecameric portal complex that is composed of the packaging efficiency factor P6, the DNA packaging ATPase P9, and the internal heterododecamer P20/P22 which spans the virion inner membrane.

Its subcellular location is the virion. Together with the packaging ATPase P9, forms the external part of the portal vertex that is embeded in the capsid and which plays critical roles in genome packaging and genome ejection. Both proteins multimerize as a single ring-shaped heterdodecamer arranged around a central channel. The chain is Packaging efficiency factor P6 (VI) from Acinetobacter calcoaceticus (Arthrobacter siderocapsulatus).